The chain runs to 246 residues: Peroxisomal membrane protein 11A (246 aa).

The Cytoplasmic portion of the chain corresponds to 1-93 (MDAFIRVANQ…LCLTLANLNR (93 aa)). Residues 94–114 (VVYYICDTVLWAKSVGLTSGV) form a helical membrane-spanning segment. The Lumenal portion of the chain corresponds to 115–217 (NREKWQRWAA…LNQLGIYKSN (103 aa)). A helical transmembrane segment spans residues 218 to 238 (LGVVGLGGLISSLAGLLTVVY). Positions 218–238 (LGVVGLGGLISSLAGLLTVVY) are required for homodimerization, interaction with PEX11G, and peroxisomal localization. Over 239–246 (PQLKLKAR) the chain is Cytoplasmic.

Belongs to the peroxin-11 family. In terms of assembly, homodimer. Heterodimer with PEX11G. Probably interacts with COPB2 and COPA. Interacts with PEX19. Interacts with FIS1. As to expression, strongly expressed in liver and at lower levels in heart, brain, kidney and testis.

The protein localises to the peroxisome membrane. Its function is as follows. May be involved in peroxisomal proliferation and may regulate peroxisomes division. May mediate binding of coatomer proteins to the peroxisomal membrane. Promotes membrane protrusion and elongation on the peroxisomal surface. The chain is Peroxisomal membrane protein 11A (Pex11a) from Mus musculus (Mouse).